The chain runs to 307 residues: Bidirectional sugar transporter SWEET11 (307 aa).

At 1–14 the chain is on the extracellular side; sequence MAGGFLSMANPAVT. Residues 15 to 35 form a helical membrane-spanning segment; that stretch reads LSGVAGNIISFLVFLAPVATF. The MtN3/slv 1 domain maps to 17–100; it reads GVAGNIISFL…VLYLVYAPRR (84 aa). At 36-47 the chain is on the cytoplasmic side; it reads LQVYKKKSTGGY. A helical membrane pass occupies residues 48–68; that stretch reads SSVPYVVALFSSVLWIFYALV. Topologically, residues 69 to 74 are extracellular; it reads KTNSRP. A helical transmembrane segment spans residues 75–95; sequence LLTINAFGCGVEAAYIVLYLV. Over 96–107 the chain is Cytoplasmic; it reads YAPRRARLRTLA. A helical membrane pass occupies residues 108 to 128; the sequence is FFLLLDVAAFALIVVTTLYLV. The Extracellular portion of the chain corresponds to 129–135; it reads PKPHQVK. The helical transmembrane segment at 136-156 threads the bilayer; that stretch reads FLGSVCLAFSMAVFVAPLSII. A MtN3/slv 2 domain is found at 136–219; it reads FLGSVCLAFS…MGLYFWYRKP (84 aa). Over 157–168 the chain is Cytoplasmic; sequence FKVIKTKSVEFM. The chain crosses the membrane as a helical span at residues 169–189; that stretch reads PIGLSVCLTLSAVAWFCYGLF. Topologically, residues 190 to 194 are extracellular; the sequence is TKDPY. The helical transmembrane segment at 195-215 threads the bilayer; it reads VMYPNVGGFFFSCVQMGLYFW. Over 216–307 the chain is Cytoplasmic; that stretch reads YRKPRNTAVL…PEVIEITAAV (92 aa).

Belongs to the SWEET sugar transporter family. Interacts with COPT1 and COPT2. Interacts with APX8. In terms of tissue distribution, mostly expressed in panicles and anthers. Also detected in leaves (leaf collar, leaf auricle, leaf ligule), roots, sheaths, culms and culm nodes.

It localises to the cell membrane. Functionally, mediates both low-affinity uptake and efflux of sugar across the plasma membrane. Required for pollen viability. Involved in the transport of copper, in cooperation with COPT1 and COPT2. In terms of biological role, confers sensitivity to bacterial blight mediated by X.oryzae pv. oryzae (Xoo) in its Xa13 allelic form (e.g. cv. IR24), probably by providing the sugar required for the pathogen growth, or by reducing copper contents in xylem. However, a recessive resistance can be associated with the xa13 allele (in which the promoter is mutated leading to reduced induction upon pathogen infection, e.g. cv. IRBB13), specifically toward Xoo Philippine race 6 and Indian race PXO8. This Oryza sativa subsp. japonica (Rice) protein is Bidirectional sugar transporter SWEET11 (SWEET11).